Consider the following 299-residue polypeptide: ATP phosphoribosyltransferase (299 aa).

This sequence belongs to the ATP phosphoribosyltransferase family. Long subfamily. The cofactor is Mg(2+).

The protein resides in the cytoplasm. The enzyme catalyses 1-(5-phospho-beta-D-ribosyl)-ATP + diphosphate = 5-phospho-alpha-D-ribose 1-diphosphate + ATP. Its pathway is amino-acid biosynthesis; L-histidine biosynthesis; L-histidine from 5-phospho-alpha-D-ribose 1-diphosphate: step 1/9. Its activity is regulated as follows. Feedback inhibited by histidine. In terms of biological role, catalyzes the condensation of ATP and 5-phosphoribose 1-diphosphate to form N'-(5'-phosphoribosyl)-ATP (PR-ATP). Has a crucial role in the pathway because the rate of histidine biosynthesis seems to be controlled primarily by regulation of HisG enzymatic activity. In Pasteurella multocida (strain Pm70), this protein is ATP phosphoribosyltransferase (hisG).